A 794-amino-acid polypeptide reads, in one-letter code: Protein sel-1 homolog 1 (794 aa).

The first 21 residues, 1 to 21 (MQVRVRLLLLLCAVLLGSAAA), serve as a signal peptide directing secretion. The interval 22-737 (SSDEETNQDE…DLFTQLDMDQ (716 aa)) is interaction with ERLEC1, OS9 and SYVN1. At 22 to 738 (SSDEETNQDE…LFTQLDMDQL (717 aa)) the chain is on the lumenal side. A compositionally biased stretch (acidic residues) spans 23–32 (SDEETNQDES). Disordered stretches follow at residues 23 to 46 (SDEE…GSVK) and 73 to 105 (QDEE…KTYE). The region spanning 122–170 (AHGEPCHFPFLFLDKEYDECTSDGREDGRLWCATTYDYKTDEKWGFCET) is the Fibronectin type-II domain. 2 disulfides stabilise this stretch: C127-C153 and C141-C168. Sel1-like repeat units lie at residues 183–218 (AEAI…GMNH), 219–254 (TKAL…EEGS), 255–290 (PKGQ…LGGN), 291–326 (LIAH…NHVA), 373–409 (VQAQ…NAGN), 410–446 (SHAM…DMGN), 447–482 (PVGQ…EQGW), 483–518 (VDGQ…QGGH), and 519–554 (ILAF…ERGR). 2 N-linked (GlcNAc...) asparagine glycosylation sites follow: N195 and N217. N-linked (GlcNAc...) asparagine glycosylation is present at N272. Residues 352–537 (NSGMLEEDLI…MHASGTGVMR (186 aa)) form an important for homodimerization and oligomerization region. N431 carries an N-linked (GlcNAc...) asparagine glycan. The N-linked (GlcNAc...) asparagine glycan is linked to N608. 2 Sel1-like repeats span residues 627-662 (TVAR…EQQH) and 664-699 (AQAM…EASP). An interaction with SYVN1 region spans residues 643-723 (TDVDYETAFI…VVYFLQYIRE (81 aa)). Positions 738-794 (LLGPEWDLYLMTIIALLLGTVIAYRQRQHQDIPVPRPPGPRPAPPQQEGPPEQQPPQ) are mediates retention in the endoplasmic reticulum. A helical transmembrane segment spans residues 739-759 (LGPEWDLYLMTIIALLLGTVI). At 760–794 (AYRQRQHQDIPVPRPPGPRPAPPQQEGPPEQQPPQ) the chain is on the cytoplasmic side. A disordered region spans residues 767–794 (QDIPVPRPPGPRPAPPQQEGPPEQQPPQ). The segment covering 771–794 (VPRPPGPRPAPPQQEGPPEQQPPQ) has biased composition (pro residues).

This sequence belongs to the sel-1 family. As to quaternary structure, homodimer and homooligomer. May form a complex with ERLEC1, HSPA5, OS9, and SYVN1. Interacts with FOXRED2 and EDEM1. Interacts with LPL and LMF1; may stabilize the complex formed by LPL and LMF1 and thereby promote the export of LPL dimers. Component of the HRD1 complex, which comprises at least SYNV1/HRD1, DERL1/2, FAM8A1, HERPUD1/HERP, OS9, SEL1L and UBE2J1. SYNV1 assembles with SEL1L and FAM8A1 through its transmembrane domains, but interaction with its cytoplasmic domain is required to confer stability to FAM8A1 and enhance recruitment of HERPUD1. The interaction with SYNV1/HRD1 is direct. Post-translationally, N-glycosylated.

It localises to the endoplasmic reticulum membrane. In terms of biological role, plays a role in the endoplasmic reticulum quality control (ERQC) system also called ER-associated degradation (ERAD) involved in ubiquitin-dependent degradation of misfolded endoplasmic reticulum proteins. Enhances SYVN1 stability. Plays a role in LPL maturation and secretion. Required for normal differentiation of the pancreas epithelium, and for normal exocrine function and survival of pancreatic cells. May play a role in Notch signaling. The protein is Protein sel-1 homolog 1 (Sel1l) of Rattus norvegicus (Rat).